The chain runs to 304 residues: Non-specific ribonucleoside hydrolase RihC (304 aa).

His233 is an active-site residue.

This sequence belongs to the IUNH family. RihC subfamily.

In terms of biological role, hydrolyzes both purine and pyrimidine ribonucleosides with a broad-substrate specificity. The chain is Non-specific ribonucleoside hydrolase RihC from Shigella boydii serotype 18 (strain CDC 3083-94 / BS512).